The primary structure comprises 1887 residues: Protein TIC 214 (1887 aa).

Transmembrane regions (helical) follow at residues 18 to 38 (IINS…FSIG), 64 to 84 (FITG…HLAL), 87 to 107 (PHTI…WNNH), 124 to 144 (LSIQ…HFIL), 172 to 192 (VGWL…LVWI), and 221 to 241 (IFSI…PSPI). Disordered stretches follow at residues 248-300 (EASK…EGWD), 785-805 (REEQ…DNKR), and 1569-1603 (LPSN…NLSP). Over residues 256–268 (VESEEERDVEIET) the composition is skewed to acidic residues. The segment covering 1578–1597 (RSQETKEPPSQRERGSDIEN) has biased composition (basic and acidic residues).

It belongs to the TIC214 family. In terms of assembly, part of the Tic complex.

The protein localises to the plastid. It localises to the chloroplast inner membrane. Its function is as follows. Involved in protein precursor import into chloroplasts. May be part of an intermediate translocation complex acting as a protein-conducting channel at the inner envelope. In Solanum tuberosum (Potato), this protein is Protein TIC 214.